The following is a 459-amino-acid chain: Putrescine aminotransferase (459 aa).

Residues 150 to 151 (GT) and Gln274 contribute to the pyridoxal 5'-phosphate site. At Lys300 the chain carries N6-(pyridoxal phosphate)lysine. A pyridoxal 5'-phosphate-binding site is contributed by Thr332.

The protein belongs to the class-III pyridoxal-phosphate-dependent aminotransferase family. Putrescine aminotransferase subfamily. The cofactor is pyridoxal 5'-phosphate.

The catalysed reaction is an alkane-alpha,omega-diamine + 2-oxoglutarate = an omega-aminoaldehyde + L-glutamate. The enzyme catalyses putrescine + 2-oxoglutarate = 1-pyrroline + L-glutamate + H2O. It carries out the reaction cadaverine + 2-oxoglutarate = 5-aminopentanal + L-glutamate. The protein operates within amine and polyamine degradation; putrescine degradation; 4-aminobutanal from putrescine (transaminase route): step 1/1. Catalyzes the aminotransferase reaction from putrescine to 2-oxoglutarate, leading to glutamate and 4-aminobutanal, which spontaneously cyclizes to form 1-pyrroline. This is the first step in one of two pathways for putrescine degradation, where putrescine is converted into 4-aminobutanoate (gamma-aminobutyrate or GABA) via 4-aminobutanal. Also functions as a cadaverine transaminase in a a L-lysine degradation pathway to succinate that proceeds via cadaverine, glutarate and L-2-hydroxyglutarate. The polypeptide is Putrescine aminotransferase (Escherichia coli O6:K15:H31 (strain 536 / UPEC)).